Reading from the N-terminus, the 518-residue chain is G-protein coupled receptor 161 (518 aa).

The Extracellular portion of the chain corresponds to 1-26; it reads MNSSSDGANEGAGAAADNGPTKVAES. Asn-2 carries N-linked (GlcNAc...) asparagine glycosylation. A helical membrane pass occupies residues 27-47; the sequence is IAIIIIDILICLGNLVIVVTL. Residues 48–59 are Cytoplasmic-facing; it reads YKKSYLLSLSNK. Residues 60–80 traverse the membrane as a helical segment; the sequence is FVFSLTFSNLLLSMLVLPFVV. Topologically, residues 81–97 are extracellular; it reads VSSILREWIFGVVWCNF. Residues Cys-95 and Cys-173 are joined by a disulfide bond. N-linked (GlcNAc...) asparagine glycosylation occurs at Asn-96. Residues 98–118 form a helical membrane-spanning segment; the sequence is SALLYMLISSASMLTLGIIAI. Over 119-138 the chain is Cytoplasmic; that stretch reads DRYYAVLYPMVYPMKITGNR. Residues 139–159 traverse the membrane as a helical segment; it reads AVLALVYVWLHSLIGCLPPLF. Over 160 to 185 the chain is Extracellular; sequence GWSTLEFDHFKWMCVAAWHKEAGYTA. Residues 186-206 form a helical membrane-spanning segment; sequence FWQVWCALLPFIVMMICYGFI. The Cytoplasmic portion of the chain corresponds to 207–264; the sequence is FRVARIKARKIHCGTVIIVQEASQKNGRKNSSTSTSSSGSRKNGFSSIVYSANQCKAL. A helical transmembrane segment spans residues 265–285; it reads ITILVVIGAFVLTWGPYMIVI. Over 286 to 301 the chain is Extracellular; that stretch reads STEALKGKNSVSPVLE. The helical transmembrane segment at 302 to 322 threads the bilayer; that stretch reads TLATWLSFTSAICHPLIYGLW. Over 323 to 518 the chain is Cytoplasmic; the sequence is NKTVRKELLG…GNIETSKCDV (196 aa). Residues 429–448 are disordered; the sequence is EVEQKNDARTMPTQPTAPSE. The span at 439 to 448 shows a compositional bias: polar residues; it reads MPTQPTAPSE.

This sequence belongs to the G-protein coupled receptor 1 family.

It is found in the cell projection. The protein resides in the cilium membrane. Its subcellular location is the cell membrane. Its function is as follows. Key negative regulator of Shh signaling during neural tube development. Recruited to primary cilia and acts as a regulator of the PKA-dependent basal repression machinery in Shh signaling by increasing cAMP levels, leading to promote the PKA-dependent processing of gli3 into gli3r and repress the Shh signaling. In presence of shh, it is removed from primary cilia, preventing its activity and allowing activation of the Shh signaling. The chain is G-protein coupled receptor 161 (gpr161) from Xenopus tropicalis (Western clawed frog).